A 147-amino-acid chain; its full sequence is Hemoglobin subunit beta-1 (147 aa).

The Globin domain maps to 3-147 (EWTDKERSII…VVSALGKQYH (145 aa)). Positions 64 and 93 each coordinate heme b.

It belongs to the globin family. Heterotetramer of two alpha chains and two beta chains. As to expression, red blood cells.

Functionally, involved in oxygen transport from gills to the various peripheral tissues. This chain is Hemoglobin subunit beta-1 (hbb1), found in Pagothenia borchgrevinki (Bald rockcod).